A 580-amino-acid polypeptide reads, in one-letter code: Probable inactive 1-aminocyclopropane-1-carboxylate synthase-like protein 2 (580 aa).

Residues 1–43 are disordered; it reads MSENRNEGSSQAAKANSDTQTPSHFKVTHPRLRDQLKKKSSKK. Residues 7–23 are compositionally biased toward polar residues; the sequence is EGSSQAAKANSDTQTPS. Lys-417 is modified (N6-(pyridoxal phosphate)lysine).

This sequence belongs to the class-I pyridoxal-phosphate-dependent aminotransferase family.

This chain is Probable inactive 1-aminocyclopropane-1-carboxylate synthase-like protein 2 (Accsl), found in Mus musculus (Mouse).